The chain runs to 242 residues: ATP synthase subunit a (242 aa).

The next 6 helical transmembrane spans lie at 31 to 51 (IYMLLASILALTYFYLAFYNW), 84 to 104 (FIPLFFSLFIFILFCNLLGMT), 114 to 134 (IIVTFALAILVFLTITIVGFV), 140 to 160 (FLTLFLPHGTPLWLAPLMIVI), 189 to 209 (VIASFTISLMIYLKFISIPLM), and 210 to 230 (VILIGFEIFIAVLQAYIFTIL).

Belongs to the ATPase A chain family. In terms of assembly, F-type ATPases have 2 components, CF(1) - the catalytic core - and CF(0) - the membrane proton channel. CF(1) has five subunits: alpha(3), beta(3), gamma(1), delta(1), epsilon(1). CF(0) has three main subunits: a(1), b(2) and c(9-12). The alpha and beta chains form an alternating ring which encloses part of the gamma chain. CF(1) is attached to CF(0) by a central stalk formed by the gamma and epsilon chains, while a peripheral stalk is formed by the delta and b chains.

It is found in the cell inner membrane. Key component of the proton channel; it plays a direct role in the translocation of protons across the membrane. This Rickettsia canadensis (strain McKiel) protein is ATP synthase subunit a.